Here is a 132-residue protein sequence, read N- to C-terminus: Small ribosomal subunit protein uS8 (132 aa).

Belongs to the universal ribosomal protein uS8 family. As to quaternary structure, part of the 30S ribosomal subunit. Contacts proteins S5 and S12.

Functionally, one of the primary rRNA binding proteins, it binds directly to 16S rRNA central domain where it helps coordinate assembly of the platform of the 30S subunit. The sequence is that of Small ribosomal subunit protein uS8 from Xylella fastidiosa (strain M23).